The following is a 292-amino-acid chain: Probable 2-(5''-triphosphoribosyl)-3'-dephosphocoenzyme-A synthase (292 aa).

Belongs to the CitG/MdcB family.

It catalyses the reaction 3'-dephospho-CoA + ATP = 2'-(5''-triphospho-alpha-D-ribosyl)-3'-dephospho-CoA + adenine. Involved in the formation of 2-(5''-phosphoribosyl)-3'-dephosphocoenzyme-A, the prosthetic group of the acyl-carrier protein of the malonate decarboxylase. This Azotobacter vinelandii (strain DJ / ATCC BAA-1303) protein is Probable 2-(5''-triphosphoribosyl)-3'-dephosphocoenzyme-A synthase.